Here is a 554-residue protein sequence, read N- to C-terminus: MAIQHPDIQPAVNHSVQVAIAGAGPVGLMMANYLGQMGIDVLVVEKLDKLIDYPRAIGIDDEALRTMQSVGLVENVLPHTTPWHAMRFLTPKGRCFADIQPMTDEFGWPRRNAFIQPQVDAVMLEGLSRFPNVRCLFSRELEAFSQQDDEVTLHLKTAEGQRETIKAQWLVACDGGASFVRRTLNVPFEGKTAPNQWIVVDIANDPLSTPHIYLCCDPVRPYVSAALPHAVRRFEFMVMPGETEEQLREPQNMRKLLSKVLPNPDNVELIRQRVYTHNARLAQRFRIDRVLLAGDAAHIMPVWQGQGYNSGMRDAFNLAWKLALVIQGKARDALLDTYQQERRDHAKAMIDLSVTAGNVLAPPKRWQGTLRDGVSWLLNYLPPVKRYFLEMRFKPMPQYYGGALVREGEAKHSPVGKMFIQPKVTLENGDVTLLDNAIGANFAVIGWGCNPLWGMSDEQIQQWRALGTRFIQVVPEVQIHTAQDNHDGVLHVGDTQGRLRSWFAQHNASLVVMRPDRFVAATAIPQTLGNTLNKLASVMTLTRPDADVSVEKVA.

Residues 17 to 46 and 285 to 295 each bind FAD; these read QVAI…VVEK and FRIDRVLLAGD.

It belongs to the PheA/TfdB FAD monooxygenase family. Requires FAD as cofactor.

The catalysed reaction is 3-(3-hydroxyphenyl)propanoate + NADH + O2 + H(+) = 3-(2,3-dihydroxyphenyl)propanoate + NAD(+) + H2O. It carries out the reaction (2E)-3-(3-hydroxyphenyl)prop-2-enoate + NADH + O2 + H(+) = (2E)-3-(2,3-dihydroxyphenyl)prop-2-enoate + NAD(+) + H2O. Its pathway is aromatic compound metabolism; 3-phenylpropanoate degradation. In terms of biological role, catalyzes the insertion of one atom of molecular oxygen into position 2 of the phenyl ring of 3-(3-hydroxyphenyl)propionate (3-HPP) and hydroxycinnamic acid (3HCI). The sequence is that of 3-(3-hydroxy-phenyl)propionate/3-hydroxycinnamic acid hydroxylase from Shigella sonnei (strain Ss046).